Consider the following 236-residue polypeptide: Uridylate kinase (236 aa).

Position 12–15 (12–15) interacts with ATP; it reads KLSG. Residues 20 to 25 are involved in allosteric activation by GTP; sequence GEKGFG. G54 contributes to the UMP binding site. ATP-binding residues include G55 and R59. UMP is bound by residues D72 and 133–140; that span reads TGNPYFST. Positions 161, 166, and 169 each coordinate ATP.

Belongs to the UMP kinase family. As to quaternary structure, homohexamer.

The protein localises to the cytoplasm. The enzyme catalyses UMP + ATP = UDP + ADP. The protein operates within pyrimidine metabolism; CTP biosynthesis via de novo pathway; UDP from UMP (UMPK route): step 1/1. Its activity is regulated as follows. Allosterically activated by GTP. Inhibited by UTP. Catalyzes the reversible phosphorylation of UMP to UDP. The sequence is that of Uridylate kinase from Alkaliphilus metalliredigens (strain QYMF).